The chain runs to 242 residues: ATP synthase subunit a (242 aa).

Helical transmembrane passes span 29–49 (SSIY…LAFY), 84–104 (FIPL…LGMT), 114–134 (IIVT…VGFV), 140–160 (FLTL…IIVI), 181–201 (MAGH…MIYL), and 203–223 (FLPI…AILQ).

It belongs to the ATPase A chain family. In terms of assembly, F-type ATPases have 2 components, CF(1) - the catalytic core - and CF(0) - the membrane proton channel. CF(1) has five subunits: alpha(3), beta(3), gamma(1), delta(1), epsilon(1). CF(0) has three main subunits: a(1), b(2) and c(9-12). The alpha and beta chains form an alternating ring which encloses part of the gamma chain. CF(1) is attached to CF(0) by a central stalk formed by the gamma and epsilon chains, while a peripheral stalk is formed by the delta and b chains.

It is found in the cell inner membrane. In terms of biological role, key component of the proton channel; it plays a direct role in the translocation of protons across the membrane. This is ATP synthase subunit a from Rickettsia peacockii (strain Rustic).